A 401-amino-acid chain; its full sequence is MGFFGRLFGSKKQEKATPNRRRWSFATRSSHPENDSSSHSSKRRGDEDVLNGDKHAIAVAAATAAVAEAALAAARAAAEVVRLTNGGRNSSVKQISRSNRRWSQEYKAAMKIQSAFRGYLARRALRALKALVKLQALVKGHIVRKQTADMLRRMQTLVRLQARARASRSSHVSDSSHPPTLMIPSSPQSFHARCVSEAEYSKVIAMDHHHNNHRSPMGSSRLLDQWRTEESLWSAPKYNEDDDKILEVDTWKPHFRESPRKRGSLVVPTSVENSPQLRSRTGSSSGGSRRKTPFTPARSEYEYYSGYHPNYMANTESYKAKVRSQSAPRQRLQDLPSESGYKRSIQGQYYYYTPAAERSFDQRSDNGIAGYRGVSDGLDRNQSDKSKMYTSFFSSNPLFFQ.

The segment at 1–48 is disordered; sequence MGFFGRLFGSKKQEKATPNRRRWSFATRSSHPENDSSSHSSKRRGDED. Residues 105–121 are calmodulin-binding; it reads EYKAAMKIQSAFRGYLA. 2 IQ domains span residues 105–133 and 134–156; these read EYKA…ALVK and LQAL…RMQT. Low complexity-rich tracts occupy residues 165–176 and 278–287; these read RASRSSHVSDSS and RSRTGSSSGG. 2 disordered regions span residues 165-186 and 258-296; these read RASR…IPSS and SPRK…PFTP.

It belongs to the IQD family. In terms of assembly, binds to multiple calmodulin (CaM) in the presence of Ca(2+) and CaM-like proteins.

The protein localises to the nucleus. Its subcellular location is the nuclear body. It is found in the cell membrane. May be involved in cooperative interactions with calmodulins or calmodulin-like proteins. Recruits calmodulin proteins to microtubules, thus being a potential scaffold in cellular signaling and trafficking. May associate with nucleic acids and regulate gene expression at the transcriptional or post-transcriptional level. This is Protein IQ-DOMAIN 24 from Arabidopsis thaliana (Mouse-ear cress).